Consider the following 542-residue polypeptide: Membrane protein insertase YidC (542 aa).

A run of 6 helical transmembrane segments spans residues 6-26, 326-346, 350-370, 421-441, 458-478, and 501-521; these read NILL…WQTD, LVVD…LLMF, FVGN…GGLY, GGCL…WVLL, LSVQ…MFLM, and VIFT…WLVG.

It belongs to the OXA1/ALB3/YidC family. Type 1 subfamily. As to quaternary structure, interacts with the Sec translocase complex via SecD. Specifically interacts with transmembrane segments of nascent integral membrane proteins during membrane integration.

The protein localises to the cell inner membrane. Its function is as follows. Required for the insertion and/or proper folding and/or complex formation of integral membrane proteins into the membrane. Involved in integration of membrane proteins that insert both dependently and independently of the Sec translocase complex, as well as at least some lipoproteins. Aids folding of multispanning membrane proteins. The protein is Membrane protein insertase YidC of Shewanella frigidimarina (strain NCIMB 400).